A 376-amino-acid chain; its full sequence is MNNRIPEDLIERAYQGKSTKEDGLLLLEVPPFELFRFADELRSLTAGDTVTYVVNRNINFTSRCVGTCGFCAFRTNDGKVLSIEEIMEKVREAEKAKATEVCIQGGLLPDVGLDFYQEIAESIKAEFPEMHIHAFSPMEVYHASHISGIKVSEALSKLKRSGLDTMPGTAAEILSDRVRKIICPSKLRTAEWIEVVTQAHAAGIPTTATMMYGHVETPEERIEHILTIREIQKETGGITEFVPLPFMPYNNPVGEKIIREGRYATPGLDDLKIYAISRILLHGHVDNIQASWVKLGKKLSQFALQCGANDLGGTLMEESISRLAGAPNGESISVEELEWMIYGAGRVPKERTTLYKGVRELASRNPGRITGCGASE.

Positions 50–284 (VTYVVNRNIN…AISRILLHGH (235 aa)) constitute a Radical SAM core domain. Residues C64, C68, and C71 each contribute to the [4Fe-4S] cluster site.

It belongs to the radical SAM superfamily. CofH family. In terms of assembly, consists of two subunits, CofG and CofH. [4Fe-4S] cluster serves as cofactor.

It catalyses the reaction 5-amino-6-(D-ribitylamino)uracil + L-tyrosine + S-adenosyl-L-methionine = 5-amino-5-(4-hydroxybenzyl)-6-(D-ribitylimino)-5,6-dihydrouracil + 2-iminoacetate + 5'-deoxyadenosine + L-methionine + H(+). It participates in cofactor biosynthesis; coenzyme F0 biosynthesis. In terms of biological role, catalyzes the radical-mediated synthesis of 5-amino-5-(4-hydroxybenzyl)-6-(D-ribitylimino)-5,6-dihydrouracil from 5-amino-6-(D-ribitylamino)uracil and L-tyrosine. In Methanosarcina barkeri (strain Fusaro / DSM 804), this protein is 5-amino-6-(D-ribitylamino)uracil--L-tyrosine 4-hydroxyphenyl transferase 1.